The chain runs to 198 residues: PEP-dependent dihydroxyacetone kinase 1, ADP-binding subunit DhaL (198 aa).

The region spanning 6–194 (DWALRWLNDF…SALLFHAMLQ (189 aa)) is the DhaL domain. Mg(2+) is bound by residues aspartate 30, aspartate 35, and aspartate 37. ADP is bound by residues 38–41 (HGIN), 79–80 (AS), glycine 120, methionine 129, arginine 166, and 179–181 (DPG).

In terms of assembly, homodimer. The dihydroxyacetone kinase complex is composed of a homodimer of DhaM, a homodimer of DhaK and the subunit DhaL. Mg(2+) serves as cofactor.

The protein localises to the cytoplasm. It carries out the reaction dihydroxyacetone + phosphoenolpyruvate = dihydroxyacetone phosphate + pyruvate. The protein operates within polyol metabolism; glycerol degradation. Its function is as follows. ADP-binding subunit of the dihydroxyacetone kinase, which is responsible for the phosphoenolpyruvate (PEP)-dependent phosphorylation of dihydroxyacetone. DhaL-ADP is converted to DhaL-ATP via a phosphoryl group transfer from DhaM and transmits it to dihydroxyacetone binds to DhaK. The chain is PEP-dependent dihydroxyacetone kinase 1, ADP-binding subunit DhaL from Listeria innocua serovar 6a (strain ATCC BAA-680 / CLIP 11262).